Consider the following 107-residue polypeptide: MMKVLVVVALLVTLISYSSSEGIDDLEADELLSLMANEQTRKECIPKHHECTSNKHSCCRGNFFKYKCQCTTVVTQDGEQTERCFCGTPPHHKAAELVVGFGKKIFG.

The N-terminal stretch at 1-20 (MMKVLVVVALLVTLISYSSS) is a signal peptide. Residues 21–41 (EGIDDLEADELLSLMANEQTR) constitute a propeptide that is removed on maturation. 4 cysteine pairs are disulfide-bonded: Cys44–Cys59, Cys51–Cys68, Cys58–Cys86, and Cys70–Cys84.

This sequence belongs to the neurotoxin 19 (CSTX) family. 04 (U1-Lctx) subfamily. As to expression, expressed by the venom gland.

It is found in the secreted. This Lycosa singoriensis (Wolf spider) protein is U1-lycotoxin-Ls1s.